Here is a 308-residue protein sequence, read N- to C-terminus: Isoaspartyl peptidase/L-asparaginase (308 aa).

Position 1 is an N-acetylmethionine (methionine 1). The active-site Nucleophile is threonine 168. Residues 196-199 (RVGD) and 219-222 (TGHG) contribute to the substrate site.

This sequence belongs to the Ntn-hydrolase family. Heterodimer of an alpha and beta chain produced by autocleavage. This heterodimer may then dimerize in turn, giving rise to a heterotetramer. Post-translationally, cleaved into an alpha and beta chain by autocatalysis; this activates the enzyme. The N-terminal residue of the beta subunit is responsible for the nucleophile hydrolase activity. Expressed in brain, kidney, testis and tissues of the gastrointestinal tract. Present in sperm (at protein level). Over-expressed in uterine, mammary, prostatic and ovarian carcinoma.

Its subcellular location is the cytoplasm. It carries out the reaction L-asparagine + H2O = L-aspartate + NH4(+). The enzyme catalyses Cleavage of a beta-linked Asp residue from the N-terminus of a polypeptide.. With respect to regulation, glycine accelerates autocleavage into an alpha and beta chain. In terms of biological role, has both L-asparaginase and beta-aspartyl peptidase activity. May be involved in the production of L-aspartate, which can act as an excitatory neurotransmitter in some brain regions. Is highly active with L-Asp beta-methyl ester. Besides, has catalytic activity toward beta-aspartyl dipeptides and their methyl esters, including beta-L-Asp-L-Phe, beta-L-Asp-L-Phe methyl ester (aspartame), beta-L-Asp-L-Ala, beta-L-Asp-L-Leu and beta-L-Asp-L-Lys. Does not have aspartylglucosaminidase activity and is inactive toward GlcNAc-L-Asn. Likewise, has no activity toward glutamine. This Homo sapiens (Human) protein is Isoaspartyl peptidase/L-asparaginase (ASRGL1).